We begin with the raw amino-acid sequence, 276 residues long: Large ribosomal subunit protein uL2 (276 aa).

A disordered region spans residues 212–276; it reads NRHRGIRPQT…KLIISRKKHK (65 aa). The span at 257–276 shows a compositional bias: basic residues; sequence YKTRKKKASDKLIISRKKHK.

This sequence belongs to the universal ribosomal protein uL2 family. As to quaternary structure, part of the 50S ribosomal subunit. Forms a bridge to the 30S subunit in the 70S ribosome.

Its function is as follows. One of the primary rRNA binding proteins. Required for association of the 30S and 50S subunits to form the 70S ribosome, for tRNA binding and peptide bond formation. It has been suggested to have peptidyltransferase activity; this is somewhat controversial. Makes several contacts with the 16S rRNA in the 70S ribosome. In Helicobacter pylori (strain HPAG1), this protein is Large ribosomal subunit protein uL2.